Here is a 912-residue protein sequence, read N- to C-terminus: Protein translocase subunit SecA (912 aa).

ATP-binding positions include Q87, 105 to 109 (GEGKT), and D508. Positions 855-912 (QHQDAGGYGADEEVEQMQGGNAPVPVSQVTRDEPKVGRNDPCPCGSGKKYKHCHGQLS) are disordered. Zn(2+) contacts are provided by C896, C898, C907, and H908. A compositionally biased stretch (basic residues) spans 902-912 (KKYKHCHGQLS).

It belongs to the SecA family. In terms of assembly, monomer and homodimer. Part of the essential Sec protein translocation apparatus which comprises SecA, SecYEG and auxiliary proteins SecDF-YajC and YidC. The cofactor is Zn(2+).

Its subcellular location is the cell inner membrane. The protein localises to the cytoplasm. It catalyses the reaction ATP + H2O + cellular proteinSide 1 = ADP + phosphate + cellular proteinSide 2.. In terms of biological role, part of the Sec protein translocase complex. Interacts with the SecYEG preprotein conducting channel. Has a central role in coupling the hydrolysis of ATP to the transfer of proteins into and across the cell membrane, serving both as a receptor for the preprotein-SecB complex and as an ATP-driven molecular motor driving the stepwise translocation of polypeptide chains across the membrane. The protein is Protein translocase subunit SecA of Xanthomonas campestris pv. campestris (strain 8004).